The following is a 355-amino-acid chain: 6-aminohexanoate-oligomer endohydrolase (355 aa).

Thr267 serves as the catalytic Nucleophile.

It belongs to the peptidase S58 family. In terms of assembly, heterotetramer composed of 4 alpha/beta heterodimers. Exists at the monomer/dimer/trimer equilibrium in aqueous solution. In terms of processing, expressed as an inactive precursor that is cleaved autocatalytically at Asn266/Thr267 to generate an active enzyme composed of an alpha subunit and a beta subunit.

The enzyme catalyses [N-(6-aminohexanoyl)]n + H2O = [N-(6-aminohexanoyl)]n-x + [N-(6-aminohexanoyl)]x.. It functions in the pathway xenobiotic degradation; nylon-6 oligomer degradation. Functionally, involved in the degradation of nylon-6 oligomers. Degrades cyclic and linear oligomers of 6-aminohexanoate (Ahx) with a degree of polymerization greater than three by an endo-type mode. Cannot use Ahx cyclic dimer or the Ahx linear dimer. This is 6-aminohexanoate-oligomer endohydrolase from Paenarthrobacter ureafaciens.